Consider the following 393-residue polypeptide: NAD(P)H-quinone oxidoreductase subunit H, chloroplastic (393 aa).

This sequence belongs to the complex I 49 kDa subunit family. As to quaternary structure, NDH is composed of at least 16 different subunits, 5 of which are encoded in the nucleus.

The protein localises to the plastid. Its subcellular location is the chloroplast thylakoid membrane. The enzyme catalyses a plastoquinone + NADH + (n+1) H(+)(in) = a plastoquinol + NAD(+) + n H(+)(out). The catalysed reaction is a plastoquinone + NADPH + (n+1) H(+)(in) = a plastoquinol + NADP(+) + n H(+)(out). NDH shuttles electrons from NAD(P)H:plastoquinone, via FMN and iron-sulfur (Fe-S) centers, to quinones in the photosynthetic chain and possibly in a chloroplast respiratory chain. The immediate electron acceptor for the enzyme in this species is believed to be plastoquinone. Couples the redox reaction to proton translocation, and thus conserves the redox energy in a proton gradient. In Guizotia abyssinica (Niger), this protein is NAD(P)H-quinone oxidoreductase subunit H, chloroplastic.